The sequence spans 1365 residues: Nuclear pore complex protein Nup154 (1365 aa).

A required for binding to Nup93-1 and anchoring to the nuclear pore complex region spans residues 1–508; sequence MTLPQAQLDF…GTHIIEVLKM (508 aa). Positions 508–986 are required for binding to chromatin; that stretch reads MVDVLRQILL…KSINPLKGTA (479 aa).

The protein belongs to the non-repetitive/WGA-negative nucleoporin family. As to quaternary structure, interacts (via N-terminus) with Nup93-1. Interacts with Nup35. Interacts with cup.

The protein resides in the nucleus. It localises to the nuclear pore complex. It is found in the chromosome. Its subcellular location is the nucleus membrane. The protein localises to the cytoplasm. Functionally, component of the nuclear pore complex. Has a role in the organization of the inner nuclear membrane proteins at the nuclear envelope. In germ cells, plays a role in the nuclear localization of components of the dpp signaling pathways, such as Medea and phosphorylated Mad. Binds to chromatin, and together with Nup62 and Nup93-1, contributes to karyosome morphology and chromatin organization including attachment to the nuclear envelope in oocytes and nurse cells. Has a role in female fertility including egg chamber development; in nurse cells, has a role in the organization of F-actin in subcortical and cytoplasmic actin filaments important for the transfer of cytoplasm from nurse cells to the growing oocytes. Has a role in male spermatogenesis and fertility. Has a role in germ line cell proliferation. The protein is Nuclear pore complex protein Nup154 of Drosophila melanogaster (Fruit fly).